A 91-amino-acid chain; its full sequence is Gem-associated protein 7 homolog (91 aa).

Residues 18–86 form the Sm domain; that stretch reads LKFYQKMASA…VVGIEYNLVQ (69 aa).

Belongs to the gemin-7 family. As to quaternary structure, part of the core SMN complex at least composed of smn1, yip11/gem2, gem6, gem7 and gem8. Interacts with gem6; the interaction is direct. Interacts with gem8; the interaction is direct.

The sequence is that of Gem-associated protein 7 homolog from Schizosaccharomyces pombe (strain 972 / ATCC 24843) (Fission yeast).